Here is a 387-residue protein sequence, read N- to C-terminus: Succinyl-diaminopimelate desuccinylase (387 aa).

His-74 contributes to the Zn(2+) binding site. The active site involves Asp-76. Asp-107 provides a ligand contact to Zn(2+). The active-site Proton acceptor is Glu-142. Zn(2+) is bound by residues Glu-143, Glu-171, and His-360.

Belongs to the peptidase M20A family. DapE subfamily. Homodimer. It depends on Zn(2+) as a cofactor. The cofactor is Co(2+).

The enzyme catalyses N-succinyl-(2S,6S)-2,6-diaminopimelate + H2O = (2S,6S)-2,6-diaminopimelate + succinate. The protein operates within amino-acid biosynthesis; L-lysine biosynthesis via DAP pathway; LL-2,6-diaminopimelate from (S)-tetrahydrodipicolinate (succinylase route): step 3/3. Catalyzes the hydrolysis of N-succinyl-L,L-diaminopimelic acid (SDAP), forming succinate and LL-2,6-diaminopimelate (DAP), an intermediate involved in the bacterial biosynthesis of lysine and meso-diaminopimelic acid, an essential component of bacterial cell walls. This chain is Succinyl-diaminopimelate desuccinylase, found in Rhodopseudomonas palustris (strain TIE-1).